Consider the following 496-residue polypeptide: Apolipoprotein N-acyltransferase (496 aa).

The next 6 helical transmembrane spans lie at 6–26 (IICFLLGILSGLVFAPTFFIP), 50–70 (FGYLFGFGHFLSGMYWISIGV), 77–97 (FWWAIPFALFGLPIILAFFIS), 114–134 (LIFCLLWVLFEWIRSWICTGL), 148–168 (ILIQPLSITGIYGLSFIVIYI), and 183–203 (LKILLASSMLILTVMVIYGAM). The 245-residue stretch at 220-464 (VQPSIPQTAK…QGLIPQKLTT (245 aa)) folds into the CN hydrolase domain. The active-site Proton acceptor is the glutamate 259. Lysine 322 is a catalytic residue. Cysteine 372 serves as the catalytic Nucleophile. Residues 474–494 (FAMLLPIVFILLIHYLLSLIF) form a helical membrane-spanning segment.

The protein belongs to the CN hydrolase family. Apolipoprotein N-acyltransferase subfamily.

Its subcellular location is the cell inner membrane. The enzyme catalyses N-terminal S-1,2-diacyl-sn-glyceryl-L-cysteinyl-[lipoprotein] + a glycerophospholipid = N-acyl-S-1,2-diacyl-sn-glyceryl-L-cysteinyl-[lipoprotein] + a 2-acyl-sn-glycero-3-phospholipid + H(+). It participates in protein modification; lipoprotein biosynthesis (N-acyl transfer). Its function is as follows. Catalyzes the phospholipid dependent N-acylation of the N-terminal cysteine of apolipoprotein, the last step in lipoprotein maturation. The sequence is that of Apolipoprotein N-acyltransferase from Rickettsia typhi (strain ATCC VR-144 / Wilmington).